Here is a 524-residue protein sequence, read N- to C-terminus: Inorganic phosphate transporter 1-1 (524 aa).

Topologically, residues 1–24 (MAEQQLGVLKALDVAKTQLYHFTA) are cytoplasmic. A helical transmembrane segment spans residues 25-45 (IVIAGMGFFTDAYDLFCVSLV). At 46–70 (TKLLGRIYYFNPESAKPGSLPPHVA) the chain is on the extracellular side. Residues 71–91 (AAVNGVALCGTLSGQLFFGWL) traverse the membrane as a helical segment. Over 92–99 (GDKLGRKK) the chain is Cytoplasmic. The chain crosses the membrane as a helical span at residues 100-120 (VYGLTLVMMILCSVASGLSFG). Residues 121 to 131 (HEAKGVMTTLC) lie on the Extracellular side of the membrane. A helical membrane pass occupies residues 132 to 152 (FFRFWLGFGIGGDYPLSATIM). Topologically, residues 153 to 161 (SEYANKKTR) are cytoplasmic. The helical transmembrane segment at 162 to 182 (GAFIAAVFAMQGVGILAGGFV) threads the bilayer. Residues 183–211 (ALAVSSIFDKKFPAPTYAVNRALSTPPQV) are Extracellular-facing. The chain crosses the membrane as a helical span at residues 212–232 (DYIWRIIVMFGALPAALTYYW). Topologically, residues 233 to 292 (RMKMPETARYTALVAKNIKQATADMSKVLQTDIELEERVEDDVKDPKQNYGLFSKEFLRR) are cytoplasmic. Residues 293-313 (HGLHLLGTTSTWFLLDIAFYS) form a helical membrane-spanning segment. Topologically, residues 314–348 (QNLFQKDIFSAIGWIPKAATMNATHEVFRIARAQT) are extracellular. A helical transmembrane segment spans residues 349-369 (LIALCSTVPGYWFTVAFIDTI). The Cytoplasmic portion of the chain corresponds to 370-371 (GR). Residues 372-392 (FKIQLNGFFMMTVFMFAIAFP) traverse the membrane as a helical segment. Topologically, residues 393–402 (YNHWIKPENR) are extracellular. Residues 403 to 423 (IGFVVMYSLTFFFANFGPNAT) form a helical membrane-spanning segment. Topologically, residues 424–441 (TFIVPAEIFPARLRSTCH) are cytoplasmic. Residues 442–462 (GISAAAGKAGAIVGAFGFLYA) traverse the membrane as a helical segment. Residues 463-484 (AQSQDKAKVDAGYPPGIGVKNS) lie on the Extracellular side of the membrane. Residues 485-505 (LIMLGVLNFIGMLFTFLVPEP) traverse the membrane as a helical segment. The Cytoplasmic segment spans residues 506 to 524 (KGKSLEELSGEAEVSHDEK).

This sequence belongs to the major facilitator superfamily. Phosphate:H(+) symporter (TC 2.A.1.9) family. In terms of assembly, interacts with NLA. Ubiquitinated by NLA. Ubiquitination of PHT1-1 leads to its degradation by the proteasome. As to expression, mostly expressed in roots, especially in trichoblasts and in emerging secondary roots and root hairs, but not in root tips. Also present in hydathodes, axillary buds and peripheral endosperm of germinating seeds.

It is found in the cell membrane. With respect to regulation, inhibited by protonophores (e.g. 2,4-dinitrophenol and carbonylcyanide m-chlorophenylhydrazone), the plasma membrane H(+)-ATPase inhibitor diethylstilbestorol, and the phosphate analog arsenate. High-affinity transporter for external inorganic phosphate. Acts as a H(+):phosphate symporter in both low- and high-Pi conditions. Confers sensitivity to arsenate. The chain is Inorganic phosphate transporter 1-1 (PHT1-1) from Arabidopsis thaliana (Mouse-ear cress).